The chain runs to 235 residues: NAD(P)H-quinone oxidoreductase subunit K, chloroplastic (235 aa).

[4Fe-4S] cluster-binding residues include cysteine 43, cysteine 44, cysteine 108, and cysteine 139.

This sequence belongs to the complex I 20 kDa subunit family. NDH is composed of at least 16 different subunits, 5 of which are encoded in the nucleus. The cofactor is [4Fe-4S] cluster.

Its subcellular location is the plastid. It is found in the chloroplast thylakoid membrane. The catalysed reaction is a plastoquinone + NADH + (n+1) H(+)(in) = a plastoquinol + NAD(+) + n H(+)(out). It carries out the reaction a plastoquinone + NADPH + (n+1) H(+)(in) = a plastoquinol + NADP(+) + n H(+)(out). Functionally, NDH shuttles electrons from NAD(P)H:plastoquinone, via FMN and iron-sulfur (Fe-S) centers, to quinones in the photosynthetic chain and possibly in a chloroplast respiratory chain. The immediate electron acceptor for the enzyme in this species is believed to be plastoquinone. Couples the redox reaction to proton translocation, and thus conserves the redox energy in a proton gradient. In Ipomoea purpurea (Common morning glory), this protein is NAD(P)H-quinone oxidoreductase subunit K, chloroplastic.